The primary structure comprises 93 residues: Small ribosomal subunit protein uS19 (93 aa).

It belongs to the universal ribosomal protein uS19 family.

In terms of biological role, protein S19 forms a complex with S13 that binds strongly to the 16S ribosomal RNA. This Leifsonia xyli subsp. xyli (strain CTCB07) protein is Small ribosomal subunit protein uS19.